The following is a 340-amino-acid chain: Guanine nucleotide-binding protein G(I)/G(S)/G(T) subunit beta-1 (340 aa).

An N-acetylserine modification is found at Ser-2. Position 2 is a phosphoserine (Ser-2). WD repeat units follow at residues 46–94 (RTRR…HAIP), 95–140 (LRSS…RELA), 141–181 (GHTG…TTFT), 182–223 (GHTG…QTFT), 224–267 (GHES…YSHD), 268–309 (NIIC…GVLA), and 310–340 (GHDN…KIWN). His-266 bears the Phosphohistidine mark.

It belongs to the WD repeat G protein beta family. G proteins are composed of 3 units, alpha, beta and gamma. The heterodimer formed by GNB1 and GNG2 interacts with ARHGEF5. The heterodimer formed by GNB1 and GNG2 interacts with GRK2. Forms a complex with GNAO1 and GNG3. Interacts with ARHGEF18 and RASD2. Forms complexes with TAS2R14 and G-proteins; these complexes play a role in the perception of bitterness. Component of the TAS2R14-GNAI1 complex, consisting of TAS2R14, GNAI1, GNB1 and GNG2. Component of the TAS2R14-GNAT3 complex, consisting of TAS2R14, GNAT3, GNB1 and GNG2. Component of the TAS2R14-GNAS2 complex, consisting of TAS2R14, GNAS2, GNB1 and GNG2. In terms of processing, phosphorylation at His-266 by NDKB contributes to G protein activation by increasing the high energetic phosphate transfer onto GDP.

In terms of biological role, guanine nucleotide-binding proteins (G proteins) are involved as a modulator or transducer in various transmembrane signaling systems. The beta and gamma chains are required for the GTPase activity, for replacement of GDP by GTP, and for G protein-effector interaction. The sequence is that of Guanine nucleotide-binding protein G(I)/G(S)/G(T) subunit beta-1 (GNB1) from Bos taurus (Bovine).